Consider the following 468-residue polypeptide: ATP synthase subunit beta (468 aa).

Position 148-155 (148-155 (GGAGVGKT)) interacts with ATP.

It belongs to the ATPase alpha/beta chains family. F-type ATPases have 2 components, CF(1) - the catalytic core - and CF(0) - the membrane proton channel. CF(1) has five subunits: alpha(3), beta(3), gamma(1), delta(1), epsilon(1). CF(0) has three main subunits: a(1), b(2) and c(9-12). The alpha and beta chains form an alternating ring which encloses part of the gamma chain. CF(1) is attached to CF(0) by a central stalk formed by the gamma and epsilon chains, while a peripheral stalk is formed by the delta and b chains.

It is found in the cell inner membrane. The enzyme catalyses ATP + H2O + 4 H(+)(in) = ADP + phosphate + 5 H(+)(out). In terms of biological role, produces ATP from ADP in the presence of a proton gradient across the membrane. The catalytic sites are hosted primarily by the beta subunits. This is ATP synthase subunit beta from Xanthomonas campestris pv. campestris (strain 8004).